Consider the following 558-residue polypeptide: Nucleoprotein (558 aa).

A binding site for the cap structure m7GTP region spans residues 54–237 (MRKEKRDDKD…ITEQQSSINI (184 aa)). Positions 382 and 384 each coordinate Mg(2+). Residues Asp382 and Glu384 each coordinate Mn(2+). Zn(2+) is bound by residues Glu392, Cys499, His502, and Cys518. Asp522 contributes to the Mg(2+) binding site. Mn(2+) is bound at residue Asp522.

The protein belongs to the arenaviridae nucleocapsid protein family. Homomultimerizes to form the nucleocapsid. Binds to viral genomic RNA. Interacts with glycoprotein G2. Interacts with protein Z; this interaction probably directs the encapsidated genome to budding sites. Interacts with protein L; this interaction does not interfere with Z-L interaction. Interacts with host IKBKE (via Protein kinase domain); the interaction inhibits IKBKE kinase activity.

It is found in the virion. The protein localises to the host cytoplasm. Functionally, encapsidates the genome, protecting it from nucleases. The encapsidated genomic RNA is termed the nucleocapsid (NC). Serves as template for viral transcription and replication. The increased presence of protein N in host cell does not seem to trigger the switch from transcription to replication as observed in other negative strain RNA viruses. Through the interaction with host IKBKE, strongly inhibits the phosphorylation and nuclear translocation of host IRF3, a protein involved in interferon activation pathway, leading to the inhibition of interferon-beta and IRF3-dependent promoters activation. Also encodes a functional 3'-5' exoribonuclease that degrades preferentially dsRNA substrates and thereby participates in the suppression of interferon induction. In Lymphocytic choriomeningitis virus (strain Armstrong) (LCMV), this protein is Nucleoprotein.